The following is a 728-amino-acid chain: MDKETIKAHKISDEEYAQILEILGREPNLLELGVISAMWSEHCSYKSSKKYLNGFPTKAPWVIQGPGENAGVIDIGQGMAAVFKVESHNHPSFIEPFAGAATGVGGILRDVFTMGARVVAGLNSLKFGDIHDEKCGKHQKYLVKGVVNGISHYGNCMGVPTIGGECAFDECFNGNILVNAFALGVCKSEDIFYAKAEGVGNPVIYVGSKTGRDGLGGAVMASDSFNEESKSLRPTVQIGDPFSEKLLMEACLELFKTDYIVGIQDMGAAGLTSSSFEMAGRSGSGMKLYLDKTPMRESGMTPYELMLSESQERMLICAKKGYEDKVIEIFKKWDLDAVVMGEVTNTGKMELFWHDELVGLIPIEPLSEKAPILSRPTSEPKYLSEIKNYKFELKSSVQELFIQMLQNENINNKAFIYDQFDSSVQTNTIKADGRLGASVIRIKENGASVAMAIECNSRLNYVNSKIGAALAVASAGRKVACTGAKPLAISDCLNYGNPQNPEVMWQFAQGCEGIKEACKELNTPVVSGNVSLYNETEGVSIYPSPTIVSVGVLEDANKTLKASFEKENLSVYLLGESLGEFSGSMVMKIQDKKVSGSLKELDYKAELALWDLLYKANQNSLLECANSVGIGGIAMTLAKMFAISSVGANLTSDFDDEKMIFDESASRAIIGLSKENEEAFLNLAKEFGVKAYKLGVSTSQKHFKLDSIELSKAELDKLYFESFKEQIQ.

The active site involves H42. ATP contacts are provided by Y45 and K84. Residue E86 participates in Mg(2+) binding. Substrate-binding positions include 87–90 (SHNH) and R109. The Proton acceptor role is filled by H88. D110 provides a ligand contact to Mg(2+). Residue Q237 coordinates substrate. D265 provides a ligand contact to Mg(2+). Residue 309–311 (ESQ) coordinates substrate. ATP contacts are provided by D491 and G528. N529 serves as a coordination point for Mg(2+). A substrate-binding site is contributed by S531.

The protein belongs to the FGAMS family. As to quaternary structure, monomer. Part of the FGAM synthase complex composed of 1 PurL, 1 PurQ and 2 PurS subunits.

It localises to the cytoplasm. It catalyses the reaction N(2)-formyl-N(1)-(5-phospho-beta-D-ribosyl)glycinamide + L-glutamine + ATP + H2O = 2-formamido-N(1)-(5-O-phospho-beta-D-ribosyl)acetamidine + L-glutamate + ADP + phosphate + H(+). The protein operates within purine metabolism; IMP biosynthesis via de novo pathway; 5-amino-1-(5-phospho-D-ribosyl)imidazole from N(2)-formyl-N(1)-(5-phospho-D-ribosyl)glycinamide: step 1/2. In terms of biological role, part of the phosphoribosylformylglycinamidine synthase complex involved in the purines biosynthetic pathway. Catalyzes the ATP-dependent conversion of formylglycinamide ribonucleotide (FGAR) and glutamine to yield formylglycinamidine ribonucleotide (FGAM) and glutamate. The FGAM synthase complex is composed of three subunits. PurQ produces an ammonia molecule by converting glutamine to glutamate. PurL transfers the ammonia molecule to FGAR to form FGAM in an ATP-dependent manner. PurS interacts with PurQ and PurL and is thought to assist in the transfer of the ammonia molecule from PurQ to PurL. The chain is Phosphoribosylformylglycinamidine synthase subunit PurL from Campylobacter jejuni subsp. jejuni serotype O:2 (strain ATCC 700819 / NCTC 11168).